Here is a 121-residue protein sequence, read N- to C-terminus: Basic phospholipase A2 CoaTx-II (121 aa).

7 cysteine pairs are disulfide-bonded: Cys26/Cys115, Cys28/Cys44, Cys43/Cys95, Cys49/Cys121, Cys50/Cys88, Cys57/Cys81, and Cys75/Cys86. The tract at residues 105–117 (KKYRIYPKFLCKK) is important for membrane-damaging activities in eukaryotes and bacteria; heparin-binding.

Belongs to the phospholipase A2 family. Group II subfamily. K49 sub-subfamily. Homodimer; non-covalently-linked. In terms of tissue distribution, expressed by the venom gland.

Its subcellular location is the secreted. Functionally, snake venom phospholipase A2 (PLA2) that lacks enzymatic inactivity. It shows antibacterial activity against both Gram-negative and Gram-positive bacteria, including methicillin-resistant strains. In vivo, it causes local muscular damage, but no systemic damage (intravenous administration does not elevate plasma creatine kinase). Also causes an inflammatory activity that is demonstrated by mice paw edema induction and pro-inflammatory cytokine IL-6 elevation. A model of myotoxic mechanism has been proposed: an apo Lys49-PLA2 is activated by the entrance of a hydrophobic molecule (e.g. fatty acid) at the hydrophobic channel of the protein leading to a reorientation of a monomer. This reorientation causes a transition between 'inactive' to 'active' states, causing alignment of C-terminal and membrane-docking sites (MDoS) side-by-side and putting the membrane-disruption sites (MDiS) in the same plane, exposed to solvent and in a symmetric position for both monomers. The MDoS region stabilizes the toxin on membrane by the interaction of charged residues with phospholipid head groups. Subsequently, the MDiS region destabilizes the membrane with penetration of hydrophobic residues. This insertion causes a disorganization of the membrane, allowing an uncontrolled influx of ions (i.e. calcium and sodium), and eventually triggering irreversible intracellular alterations and cell death. The protein is Basic phospholipase A2 CoaTx-II of Crotalus lutosus abyssus (Grand Canyon rattlesnake).